A 559-amino-acid polypeptide reads, in one-letter code: Potassium-transporting ATPase potassium-binding subunit (559 aa).

The next 13 membrane-spanning stretches (helical) occupy residues 5-25, 27-47, 63-83, 132-152, 170-190, 253-273, 283-303, 327-347, 356-376, 379-399, 416-436, 484-504, and 524-544; these read GFLL…PLGS, LARL…RILW, LLAL…LLFW, GLTV…FALI, LVRI…LFFI, LAQM…FGEA, LLWA…WAEV, FGVL…CGAV, ALGG…FGGV, GLYG…LMIG, MTAL…ALAM, LLAF…MAIA, and GALF…LTFI.

It belongs to the KdpA family. The system is composed of three essential subunits: KdpA, KdpB and KdpC.

Its subcellular location is the cell inner membrane. Functionally, part of the high-affinity ATP-driven potassium transport (or Kdp) system, which catalyzes the hydrolysis of ATP coupled with the electrogenic transport of potassium into the cytoplasm. This subunit binds the periplasmic potassium ions and delivers the ions to the membrane domain of KdpB through an intramembrane tunnel. The sequence is that of Potassium-transporting ATPase potassium-binding subunit from Salmonella enteritidis PT4 (strain P125109).